The sequence spans 84 residues: Putative UPF0320 protein YNL337W (84 aa).

Belongs to the UPF0320 family.

The protein is Putative UPF0320 protein YNL337W of Saccharomyces cerevisiae (strain ATCC 204508 / S288c) (Baker's yeast).